Here is a 191-residue protein sequence, read N- to C-terminus: ECF RNA polymerase sigma factor ShbA (191 aa).

The sigma-70 factor domain-2 stretch occupies residues 27 to 98 (LLAHVHPLAL…HKVADLQRAA (72 aa)). Residues 100 to 122 (RHPGSTAVPSDEMPERPDDSLGP) are disordered. Over residues 112–122 (MPERPDDSLGP) the composition is skewed to basic and acidic residues. Positions 138-187 (LLANLPENQRELLVLRVAVGLTAEETGQMLGMSPGAVRVAQHRALSRLRA) are sigma-70 factor domain-4. The segment at residues 160–179 (AEETGQMLGMSPGAVRVAQH) is a DNA-binding region (H-T-H motif).

This sequence belongs to the sigma-70 factor family. ECF subfamily.

In terms of biological role, sigma factors are initiation factors that promote the attachment of RNA polymerase to specific initiation sites and are then released. Extracytoplasmic function (ECF) sigma factors are held in an inactive form by an anti-sigma factor until released. This alternative sigma factor governs the transcription of the principal sigma factor HrdB (SigA) throughout growth. Acts by binding to the promoter region. The protein is ECF RNA polymerase sigma factor ShbA of Streptomyces griseus subsp. griseus (strain JCM 4626 / CBS 651.72 / NBRC 13350 / KCC S-0626 / ISP 5235).